We begin with the raw amino-acid sequence, 165 residues long: MPLNREDKQAVVAEVAAQVAKAQTVVLAEYRGIAVGDLTTLRAKAREQKVYLRVLKNTLARRAVEGTPFAPLAEQMTGPLIYGISEDAIAAAKVVNDFSKSNDKLVIKAGSFDGKVMDKAGVQALASIPSREELLSKLLFVMQAPVSGFARALAALAEKKQAEAA.

This sequence belongs to the universal ribosomal protein uL10 family. As to quaternary structure, part of the ribosomal stalk of the 50S ribosomal subunit. The N-terminus interacts with L11 and the large rRNA to form the base of the stalk. The C-terminus forms an elongated spine to which L12 dimers bind in a sequential fashion forming a multimeric L10(L12)X complex.

Forms part of the ribosomal stalk, playing a central role in the interaction of the ribosome with GTP-bound translation factors. In Burkholderia multivorans (strain ATCC 17616 / 249), this protein is Large ribosomal subunit protein uL10.